The following is a 145-amino-acid chain: uncharacterized protein (145 aa).

Residues 1-49 (MLSIFKNLLGTSEEDGTTQEANSKDTKGLKEERKRKKRKNKYKIPPGHT) are disordered. The segment covering 22–32 (NSKDTKGLKEE) has biased composition (basic and acidic residues). Positions 33 to 42 (RKRKKRKNKY) are enriched in basic residues. Phosphoserine is present on Ser68. The region spanning 69-145 (PISVTAEELA…LKTSFVGYLV (77 aa)) is the Cytochrome b5 heme-binding domain. 2 residues coordinate heme: His104 and His127.

This sequence belongs to the cytochrome b5 family.

The protein resides in the cytoplasm. This is an uncharacterized protein from Schizosaccharomyces pombe (strain 972 / ATCC 24843) (Fission yeast).